The primary structure comprises 219 residues: MNKLQREAVIRTALELLNDVGMEGLTTRRLAERLGVQQPALYWHFKNKRALLDALAEAMLTINHTHSTPRDDDDWRSFLKGNACSFRRALLAYRDGARIHAGTRPAAPQMEKADAQLRFLCDAGFSAGDATYALMAISYFTVGAVLEQQASEADAEERGEDQLTTSASTMPARLQSAMKIVYEGGPDAAFERGLALIIGGLEKMRLTTNDIEVLKNVDE.

In terms of domain architecture, HTH tetR-type spans lysine 3–asparagine 63. Positions threonine 26–phenylalanine 45 form a DNA-binding region, H-T-H motif. Tetracycline-binding residues include histidine 64 and asparagine 82. Histidine 100 serves as a coordination point for Mg(2+).

TetR is the repressor of the tetracycline resistance element; its N-terminal region forms a helix-turn-helix structure and binds DNA. Binding of tetracycline to TetR reduces the repressor affinity for the tetracycline resistance gene (tetA) promoter operator sites. The polypeptide is Tetracycline repressor protein class C (tetR) (Escherichia coli).